The sequence spans 366 residues: MNKVVLLCRPGFEKECAAEITDKAGRQEIFGFARVKENAGYVIYECYQAEDGDKLIRELPFSSLIFARQWFVVGELLQHLPPEDRITPIVGMLQGVVEKGGELRVEVADTNESKELLKFCRKFTVPLRAALRDAGVLANYETPKRPVVHVFFIAPGCCYTGYSYSNNNSPFYMGIPRLKFPADAPSRSTLKLEEAFHVFIPADEWDERLANGMWAVDLGACPGGWTYQLVKRNMWVYSVDNGPMAQSLMDTGQVTWLREDGFKFRPTRNNISWMVCDMVEKPAKVAALMAQWLVNGWCRETIFNLKLPMKKRYEEVSHNLAYIQAQLDEHGINAQIQARQLYHDREEVTVHVRRIWAAVGGRRDER.

Residues Ser188, 221–224 (CPGG), Asp240, Asp260, and Asp277 each bind S-adenosyl-L-methionine. Catalysis depends on Lys306, which acts as the Proton acceptor.

It belongs to the class I-like SAM-binding methyltransferase superfamily. RNA methyltransferase RlmE family. RlmM subfamily. As to quaternary structure, monomer.

It localises to the cytoplasm. The enzyme catalyses cytidine(2498) in 23S rRNA + S-adenosyl-L-methionine = 2'-O-methylcytidine(2498) in 23S rRNA + S-adenosyl-L-homocysteine + H(+). Its function is as follows. Catalyzes the 2'-O-methylation at nucleotide C2498 in 23S rRNA. In Escherichia fergusonii (strain ATCC 35469 / DSM 13698 / CCUG 18766 / IAM 14443 / JCM 21226 / LMG 7866 / NBRC 102419 / NCTC 12128 / CDC 0568-73), this protein is Ribosomal RNA large subunit methyltransferase M.